The sequence spans 418 residues: Beta-arrestin-1 (418 aa).

Positions 1 to 163 (MGDKGTRVFK…LEEKIHKRNS (163 aa)) are interaction with SRC. Residues 45 to 86 (PEYLKERRVYVTLTCAFRYGREDLDVLGLTFRKDLFVANVQS) are interaction with CHRM2. Tyr-47 is modified (phosphotyrosine). Residues Lys-250, Met-255, Lys-324, and Lys-326 each coordinate 1D-myo-inositol hexakisphosphate. An interaction with TRAF6 region spans residues 318-418 (IVSYKVKVKL…GTGSPHLNNR (101 aa)). Disordered regions lie at residues 353 to 375 (HPKPKEEPPHREVPESETPVDTN) and 397 to 418 (KGMKDDKDEEDDGTGSPHLNNR). Basic and acidic residues predominate over residues 355–366 (KPKEEPPHREVP). Ser-412 carries the phosphoserine modification.

Belongs to the arrestin family. In terms of assembly, monomer. Homodimer. Homooligomer; the self-association is mediated by InsP6-binding. Heterooligomer with ARRB2; the association is mediated by InsP6-binding. Interacts with ADRB2 (phosphorylated). Interacts with CHRM2 (phosphorylated). Interacts with LHCGR. Interacts with CYTH2 and CASR. Interacts with AP2B1 (dephosphorylated); phosphorylation of AP2B1 disrupts the interaction. Interacts (dephosphorylated at Ser-412) with CLTC. Interacts with CCR2 and GRK2. Interacts with CRR5. Interacts with PTAFR (phosphorylated on serine residues). Interacts with CLTC and MAP2K3. Interacts with CREB1. Interacts with TRAF6. Interacts with IGF1R and MDM2. Interacts with C5AR1. Interacts with PDE4D. Interacts with SRC (via the SH3 domain and the protein kinase domain); the interaction is independent of the phosphorylation state of SRC C-terminus. Interacts with TACR1. Interacts with RAF1. Interacts with DVL1; the interaction is enhanced by phosphorylation of DVL1. Interacts with DVL2; the interaction is enhanced by phosphorylation of DVL2. Interacts with IGF1R. Interacts with CHUK, IKBKB and MAP3K14. Associates with MAP kinase p38. Part of a MAPK signaling complex consisting of TACR1, ARRB1, SRC, MAPK1 (activated) and MAPK3 (activated). Part of a MAPK signaling complex consisting of F2RL1, ARRB1, RAF1, MAPK1 (activated) and MAPK3 (activated). Interacts with GPR143. Interacts with MAP2K4/MKK4. Interacts with HCK and CXCR1 (phosphorylated). Interacts with ACKR3 and ACKR4. Interacts with ARRDC1; the interaction is direct. Interacts with GPR61, GPR62 and GPR135. In terms of processing, constitutively phosphorylated at in the cytoplasm. At the plasma membrane, is rapidly dephosphorylated, a process that is required for clathrin binding and ADRB2 endocytosis but not for ADRB2 binding and desensitization. Once internalized, is rephosphorylated. The ubiquitination status appears to regulate the formation and trafficking of beta-arrestin-GPCR complexes and signaling. Ubiquitination appears to occur GPCR-specific. Ubiquitinated by MDM2; the ubiquitination is required for rapid internalization of ADRB2. Deubiquitinated by USP33; the deubiquitination leads to a dissociation of the beta-arrestin-GPCR complex. Stimulation of a class A GPCR, such as ADRB2, induces transient ubiquitination and subsequently promotes association with USP33.

The protein resides in the cytoplasm. It is found in the nucleus. The protein localises to the cell membrane. It localises to the membrane. Its subcellular location is the clathrin-coated pit. The protein resides in the cell projection. It is found in the pseudopodium. The protein localises to the cytoplasmic vesicle. Its function is as follows. Functions in regulating agonist-mediated G-protein coupled receptor (GPCR) signaling by mediating both receptor desensitization and resensitization processes. During homologous desensitization, beta-arrestins bind to the GPRK-phosphorylated receptor and sterically preclude its coupling to the cognate G-protein; the binding appears to require additional receptor determinants exposed only in the active receptor conformation. The beta-arrestins target many receptors for internalization by acting as endocytic adapters (CLASPs, clathrin-associated sorting proteins) and recruiting the GPRCs to the adapter protein 2 complex 2 (AP-2) in clathrin-coated pits (CCPs). However, the extent of beta-arrestin involvement appears to vary significantly depending on the receptor, agonist and cell type. Internalized arrestin-receptor complexes traffic to intracellular endosomes, where they remain uncoupled from G-proteins. Two different modes of arrestin-mediated internalization occur. Class A receptors, like ADRB2, OPRM1, ENDRA, D1AR and ADRA1B dissociate from beta-arrestin at or near the plasma membrane and undergo rapid recycling. Class B receptors, like AVPR2, AGTR1, NTSR1, TRHR and TACR1 internalize as a complex with arrestin and traffic with it to endosomal vesicles, presumably as desensitized receptors, for extended periods of time. Receptor resensitization then requires that receptor-bound arrestin is removed so that the receptor can be dephosphorylated and returned to the plasma membrane. Involved in internalization of P2RY4 and UTP-stimulated internalization of P2RY2. Involved in phosphorylation-dependent internalization of OPRD1 ands subsequent recycling. Involved in the degradation of cAMP by recruiting cAMP phosphodiesterases to ligand-activated receptors. Beta-arrestins function as multivalent adapter proteins that can switch the GPCR from a G-protein signaling mode that transmits short-lived signals from the plasma membrane via small molecule second messengers and ion channels to a beta-arrestin signaling mode that transmits a distinct set of signals that are initiated as the receptor internalizes and transits the intracellular compartment. Acts as a signaling scaffold for MAPK pathways such as MAPK1/3 (ERK1/2). ERK1/2 activated by the beta-arrestin scaffold is largely excluded from the nucleus and confined to cytoplasmic locations such as endocytic vesicles, also called beta-arrestin signalosomes. Recruits c-Src/SRC to ADRB2 resulting in ERK activation. GPCRs for which the beta-arrestin-mediated signaling relies on both ARRB1 and ARRB2 (codependent regulation) include ADRB2, F2RL1 and PTH1R. For some GPCRs the beta-arrestin-mediated signaling relies on either ARRB1 or ARRB2 and is inhibited by the other respective beta-arrestin form (reciprocal regulation). Inhibits ERK1/2 signaling in AGTR1- and AVPR2-mediated activation (reciprocal regulation). Is required for SP-stimulated endocytosis of NK1R and recruits c-Src/SRC to internalized NK1R resulting in ERK1/2 activation, which is required for the antiapoptotic effects of SP. Is involved in proteinase-activated F2RL1-mediated ERK activity. Acts as a signaling scaffold for the AKT1 pathway. Is involved in alpha-thrombin-stimulated AKT1 signaling. Is involved in IGF1-stimulated AKT1 signaling leading to increased protection from apoptosis. Involved in activation of the p38 MAPK signaling pathway and in actin bundle formation. Involved in F2RL1-mediated cytoskeletal rearrangement and chemotaxis. Involved in AGTR1-mediated stress fiber formation by acting together with GNAQ to activate RHOA. Appears to function as signaling scaffold involved in regulation of MIP-1-beta-stimulated CCR5-dependent chemotaxis. Involved in attenuation of NF-kappa-B-dependent transcription in response to GPCR or cytokine stimulation by interacting with and stabilizing CHUK. May serve as nuclear messenger for GPCRs. Involved in OPRD1-stimulated transcriptional regulation by translocating to CDKN1B and FOS promoter regions and recruiting EP300 resulting in acetylation of histone H4. Involved in regulation of LEF1 transcriptional activity via interaction with DVL1 and/or DVL2 Also involved in regulation of receptors other than GPCRs. Involved in Toll-like receptor and IL-1 receptor signaling through the interaction with TRAF6 which prevents TRAF6 autoubiquitination and oligomerization required for activation of NF-kappa-B and JUN. Involved in IL8-mediated granule release in neutrophils. Binds phosphoinositides. Binds inositolhexakisphosphate (InsP6). Required for atypical chemokine receptor ACKR2-induced RAC1-LIMK1-PAK1-dependent phosphorylation of cofilin (CFL1) and for the up-regulation of ACKR2 from endosomal compartment to cell membrane, increasing its efficiency in chemokine uptake and degradation. Involved in the internalization of the atypical chemokine receptor ACKR3. Negatively regulates the NOTCH signaling pathway by mediating the ubiquitination and degradation of NOTCH1 by ITCH. Participates in the recruitment of the ubiquitin-protein ligase to the receptor. The chain is Beta-arrestin-1 (Arrb1) from Mus musculus (Mouse).